The following is a 513-amino-acid chain: Probable WRKY transcription factor 3 (513 aa).

Residues 1-11 (MAEKEEKEPSK) show a composition bias toward basic and acidic residues. Disordered stretches follow at residues 1–26 (MAEKEEKEPSKLKSSTGVSRPTISLP), 175–281 (NVHM…PACP), and 297–394 (IIYK…VASS). Over residues 179-201 (QQSQQSEYPSSTQQQQQQQQQAS) the composition is skewed to low complexity. The segment covering 202–228 (LTEIPSFSSAPRSQIRASVQETSQGQR) has biased composition (polar residues). Basic and acidic residues predominate over residues 229-240 (ETSEISVFEHRS). A DNA-binding region (WRKY 1) is located at residues 244-308 (NADKPADDGY…YKGQHNHELP (65 aa)). 2 stretches are compositionally biased toward polar residues: residues 311-335 (RGNNNGSCKSSDIANQFQTSNSSLN) and 343-355 (TSQVTTTEQMSEA). The span at 368-387 (VGERHEDEPDPKRRNTEVRV) shows a compositional bias: basic and acidic residues. A DNA-binding region (WRKY 2) is located at residues 409 to 474 (SEVDLLDDGY…YEGKHNHDVP (66 aa)).

As to expression, in young, mature and senescent leaves.

It is found in the nucleus. Functionally, transcription factor. Interacts specifically with the W box (5'-(T)TGAC[CT]-3'), a frequently occurring elicitor-responsive cis-acting element. This Arabidopsis thaliana (Mouse-ear cress) protein is Probable WRKY transcription factor 3 (WRKY3).